Reading from the N-terminus, the 161-residue chain is Ubiquitin-conjugating enzyme 15 (161 aa).

The UBC core domain occupies 15 to 161 (IACNRLQKEL…TRWWFHDDKV (147 aa)). The active-site Glycyl thioester intermediate is cysteine 99.

The protein belongs to the ubiquitin-conjugating enzyme family.

It carries out the reaction S-ubiquitinyl-[E1 ubiquitin-activating enzyme]-L-cysteine + [E2 ubiquitin-conjugating enzyme]-L-cysteine = [E1 ubiquitin-activating enzyme]-L-cysteine + S-ubiquitinyl-[E2 ubiquitin-conjugating enzyme]-L-cysteine.. It functions in the pathway protein modification; protein ubiquitination. Functionally, accepts the ubiquitin from the E1 complex and catalyzes its covalent attachment to other proteins. The sequence is that of Ubiquitin-conjugating enzyme 15 (UBC15) from Arabidopsis thaliana (Mouse-ear cress).